The sequence spans 416 residues: Serine hydroxymethyltransferase (416 aa).

Residues L118 and 122 to 124 (GHL) contribute to the (6S)-5,6,7,8-tetrahydrofolate site. Residue K226 is modified to N6-(pyridoxal phosphate)lysine. Residues E242 and 350-352 (SPF) each bind (6S)-5,6,7,8-tetrahydrofolate.

The protein belongs to the SHMT family. As to quaternary structure, homodimer. The cofactor is pyridoxal 5'-phosphate.

The protein localises to the cytoplasm. The catalysed reaction is (6R)-5,10-methylene-5,6,7,8-tetrahydrofolate + glycine + H2O = (6S)-5,6,7,8-tetrahydrofolate + L-serine. The protein operates within one-carbon metabolism; tetrahydrofolate interconversion. Its pathway is amino-acid biosynthesis; glycine biosynthesis; glycine from L-serine: step 1/1. Catalyzes the reversible interconversion of serine and glycine with tetrahydrofolate (THF) serving as the one-carbon carrier. This reaction serves as the major source of one-carbon groups required for the biosynthesis of purines, thymidylate, methionine, and other important biomolecules. Also exhibits THF-independent aldolase activity toward beta-hydroxyamino acids, producing glycine and aldehydes, via a retro-aldol mechanism. This is Serine hydroxymethyltransferase from Wolinella succinogenes (strain ATCC 29543 / DSM 1740 / CCUG 13145 / JCM 31913 / LMG 7466 / NCTC 11488 / FDC 602W) (Vibrio succinogenes).